The primary structure comprises 190 residues: Transcription factor bHLH162 (190 aa).

The span at 1–12 shows a compositional bias: polar residues; it reads MEPSHSNTGQSR. The disordered stretch occupies residues 1–21; it reads MEPSHSNTGQSRSVDRKTVEK. The bHLH domain occupies 11–63; the sequence is SRSVDRKTVEKNRRMQMKSLYSELISLLPHHSSTEPLTLPDQLDEAANYIKKL.

This sequence belongs to the bHLH protein family.

Its subcellular location is the nucleus. The sequence is that of Transcription factor bHLH162 from Arabidopsis thaliana (Mouse-ear cress).